The sequence spans 317 residues: Ribosomal protein L11 methyltransferase (317 aa).

4 residues coordinate S-adenosyl-L-methionine: threonine 158, glycine 179, aspartate 201, and asparagine 244.

It belongs to the methyltransferase superfamily. PrmA family.

The protein localises to the cytoplasm. It carries out the reaction L-lysyl-[protein] + 3 S-adenosyl-L-methionine = N(6),N(6),N(6)-trimethyl-L-lysyl-[protein] + 3 S-adenosyl-L-homocysteine + 3 H(+). Its function is as follows. Methylates ribosomal protein L11. This Lactococcus lactis subsp. lactis (strain IL1403) (Streptococcus lactis) protein is Ribosomal protein L11 methyltransferase.